A 149-amino-acid polypeptide reads, in one-letter code: Epoxide hydrolase EphG (149 aa).

The Proton donor role is filled by Asp-93. The Proton acceptor role is filled by Asp-122.

The protein belongs to the limonene-1,2-epoxide hydrolase family. In terms of assembly, homodimer. Is also present as monomer in solution.

It catalyses the reaction an epoxide + H2O = an ethanediol. The catalysed reaction is 5,6alpha-epoxy-5alpha-cholestan-3beta-ol + H2O = 5alpha-cholestane-3beta,5,6beta-triol. It carries out the reaction 5,6beta-epoxy-5beta-cholestan-3beta-ol + H2O = 5alpha-cholestane-3beta,5,6beta-triol. With respect to regulation, is inhibited by the anti-epileptic drug valpromide (Ki value of about 100 uM). Functionally, epoxide hydrolase capable of hydrolyzing long or bulky lipophilic epoxides such as 9,10-epoxystearic acid and cholesterol 5,6-oxide in vitro. The physiological substrates have yet to be identified, but could be fatty acid or steroid derivatives. This is Epoxide hydrolase EphG (ephG) from Mycobacterium tuberculosis (strain ATCC 25618 / H37Rv).